The sequence spans 764 residues: Calpain-like protease palB/RIM13 (764 aa).

In terms of domain architecture, Calpain catalytic spans 95-368 (GEFYPPLTVY…FKYFYINWNP (274 aa)). Residues Cys-165, His-318, and Asn-336 contribute to the active site.

This sequence belongs to the peptidase C2 family. PalB/RIM13 subfamily.

Functionally, required for the proteolytic cleavage of the transcription factor RIM101 in response to alkaline ambient pH. The chain is Calpain-like protease palB/RIM13 from Debaryomyces hansenii (strain ATCC 36239 / CBS 767 / BCRC 21394 / JCM 1990 / NBRC 0083 / IGC 2968) (Yeast).